A 121-amino-acid polypeptide reads, in one-letter code: Large ribosomal subunit protein bL12 (121 aa).

Belongs to the bacterial ribosomal protein bL12 family. Homodimer. Part of the ribosomal stalk of the 50S ribosomal subunit. Forms a multimeric L10(L12)X complex, where L10 forms an elongated spine to which 2 to 4 L12 dimers bind in a sequential fashion. Binds GTP-bound translation factors.

Functionally, forms part of the ribosomal stalk which helps the ribosome interact with GTP-bound translation factors. Is thus essential for accurate translation. This Clostridium novyi (strain NT) protein is Large ribosomal subunit protein bL12.